A 73-amino-acid chain; its full sequence is Gastricsin (73 aa).

Positions 1 to 43 are cleaved as a propeptide — activation peptide; sequence SVIKVPLKKLKSIRQAMKEKGLLEEFLKTHKYDPAQRYRIGDI. Residues 57 to 73 form the Peptidase A1 domain; the sequence is YFGEISIGTPPQNFLVL.

This sequence belongs to the peptidase A1 family.

The protein localises to the secreted. It catalyses the reaction More restricted specificity than pepsin A, but shows preferential cleavage at Tyr-|-Xaa bonds. High activity on hemoglobin.. In terms of biological role, hydrolyzes a variety of proteins. The polypeptide is Gastricsin (PGC) (Sus scrofa (Pig)).